The following is a 259-amino-acid chain: Protein SODIUM POTASSIUM ROOT DEFECTIVE 2 (259 aa).

The interval 141–165 is disordered; it reads PDSITGSVDQDPAKTVEAEAPAGED. Residues 151–165 show a composition bias toward basic and acidic residues; it reads DPAKTVEAEAPAGED. The HMA domain maps to 180 to 246; sequence QQVVVLKVSL…KVKNAQFWTN (67 aa). Residues cysteine 191 and cysteine 194 each contribute to the a metal cation site.

The protein is Protein SODIUM POTASSIUM ROOT DEFECTIVE 2 of Arabidopsis thaliana (Mouse-ear cress).